Reading from the N-terminus, the 558-residue chain is Glucose-6-phosphate isomerase (558 aa).

Alanine 2 is modified (N-acetylalanine). An N6-acetyllysine modification is found at lysine 12. Lysine 34 bears the N6-(2-hydroxyisobutyryl)lysine mark. Serine 107 carries the post-translational modification Phosphoserine. Threonine 109 carries the phosphothreonine modification. At lysine 142 the chain carries N6-acetyllysine. Residue 159 to 160 coordinates D-glucose 6-phosphate; the sequence is GS. Serine 185 is modified (phosphoserine; by CK2). 210–215 lines the D-glucose 6-phosphate pocket; it reads SKTFTT. Phosphothreonine is present on threonine 250. D-glucose 6-phosphate contacts are provided by glutamine 354, glutamate 358, and histidine 389. Glutamate 358 acts as the Proton donor in catalysis. Histidine 389 is a catalytic residue. Lysine 454 carries the N6-acetyllysine; alternate modification. Lysine 454 carries the post-translational modification N6-malonyllysine; alternate. The residue at position 454 (lysine 454) is an N6-succinyllysine; alternate. Serine 455 bears the Phosphoserine mark. Lysine 519 provides a ligand contact to D-glucose 6-phosphate. The active site involves lysine 519.

This sequence belongs to the GPI family. Homodimer in the catalytically active form, monomer in the secreted form. Phosphorylation at Ser-185 by CK2 has been shown to decrease enzymatic activity and may contribute to secretion by a non-classical secretory pathway. In terms of processing, ISGylated.

It localises to the cytoplasm. The protein resides in the secreted. The catalysed reaction is alpha-D-glucose 6-phosphate = beta-D-fructose 6-phosphate. It participates in carbohydrate degradation; glycolysis; D-glyceraldehyde 3-phosphate and glycerone phosphate from D-glucose: step 2/4. Functionally, in the cytoplasm, catalyzes the conversion of glucose-6-phosphate to fructose-6-phosphate, the second step in glycolysis, and the reverse reaction during gluconeogenesis. Besides it's role as a glycolytic enzyme, also acts as a secreted cytokine: acts as an angiogenic factor (AMF) that stimulates endothelial cell motility. Acts as a neurotrophic factor, neuroleukin, for spinal and sensory neurons. It is secreted by lectin-stimulated T-cells and induces immunoglobulin secretion. This Sus scrofa (Pig) protein is Glucose-6-phosphate isomerase.